A 659-amino-acid polypeptide reads, in one-letter code: Putative RING finger protein R311 (659 aa).

The RING-type zinc finger occupies Cys-502–Met-540.

In Acanthamoeba polyphaga (Amoeba), this protein is Putative RING finger protein R311.